A 198-amino-acid chain; its full sequence is Neutrophil gelatinase-associated lipocalin (198 aa).

The signal sequence occupies residues 1–20 (MPLGLLWLGLALLGALHAQA). Gln21 is subject to Pyrrolidone carboxylic acid. 72–74 (YAT) contributes to the a carboxymycobactin binding site. The N-linked (GlcNAc...) asparagine glycan is linked to Asn85. The cysteines at positions 96 and 195 are disulfide-linked. Position 126 (Tyr126) interacts with enterobactin. 3 residues coordinate a carboxymycobactin: Lys145, Lys154, and Tyr158. Lys154 contacts enterobactin.

This sequence belongs to the calycin superfamily. Lipocalin family. In terms of assembly, monomer. Homodimer; disulfide-linked. Heterodimer; disulfide-linked with MMP9. As to expression, detected in neutrophils (at protein level). Expressed in bone marrow and in tissues that are prone to exposure to microorganism. High expression is found in bone marrow as well as in uterus, prostate, salivary gland, stomach, appendix, colon, trachea and lung. Expressed in the medullary tubules of the kidney. Not found in the small intestine or peripheral blood leukocytes.

The protein resides in the secreted. It is found in the cytoplasmic granule lumen. It localises to the cytoplasmic vesicle lumen. Functionally, iron-trafficking protein involved in multiple processes such as apoptosis, innate immunity and renal development. Binds iron through association with 2,3-dihydroxybenzoic acid (2,3-DHBA), a siderophore that shares structural similarities with bacterial enterobactin, and delivers or removes iron from the cell, depending on the context. Iron-bound form (holo-24p3) is internalized following binding to the SLC22A17 (24p3R) receptor, leading to release of iron and subsequent increase of intracellular iron concentration. In contrast, association of the iron-free form (apo-24p3) with the SLC22A17 (24p3R) receptor is followed by association with an intracellular siderophore, iron chelation and iron transfer to the extracellular medium, thereby reducing intracellular iron concentration. Involved in apoptosis due to interleukin-3 (IL3) deprivation: iron-loaded form increases intracellular iron concentration without promoting apoptosis, while iron-free form decreases intracellular iron levels, inducing expression of the proapoptotic protein BCL2L11/BIM, resulting in apoptosis. Involved in innate immunity; limits bacterial proliferation by sequestering iron bound to microbial siderophores, such as enterobactin. Can also bind siderophores from M.tuberculosis. This Homo sapiens (Human) protein is Neutrophil gelatinase-associated lipocalin (LCN2).